The sequence spans 1203 residues: DNA-directed RNA polymerase subunit beta' (1203 aa).

Zn(2+)-binding residues include Cys60, Cys62, Cys75, and Cys78. Asp449, Asp451, and Asp453 together coordinate Mg(2+). The Zn(2+) site is built by Cys818, Cys892, Cys899, and Cys902.

Belongs to the RNA polymerase beta' chain family. As to quaternary structure, the RNAP catalytic core consists of 2 alpha, 1 beta, 1 beta' and 1 omega subunit. When a sigma factor is associated with the core the holoenzyme is formed, which can initiate transcription. Mg(2+) is required as a cofactor. Zn(2+) serves as cofactor.

It catalyses the reaction RNA(n) + a ribonucleoside 5'-triphosphate = RNA(n+1) + diphosphate. Its function is as follows. DNA-dependent RNA polymerase catalyzes the transcription of DNA into RNA using the four ribonucleoside triphosphates as substrates. The protein is DNA-directed RNA polymerase subunit beta' of Bacillus thuringiensis (strain Al Hakam).